Reading from the N-terminus, the 205-residue chain is ATP phosphoribosyltransferase (205 aa).

This sequence belongs to the ATP phosphoribosyltransferase family. Short subfamily. In terms of assembly, heteromultimer composed of HisG and HisZ subunits.

The protein resides in the cytoplasm. The catalysed reaction is 1-(5-phospho-beta-D-ribosyl)-ATP + diphosphate = 5-phospho-alpha-D-ribose 1-diphosphate + ATP. It functions in the pathway amino-acid biosynthesis; L-histidine biosynthesis; L-histidine from 5-phospho-alpha-D-ribose 1-diphosphate: step 1/9. Its function is as follows. Catalyzes the condensation of ATP and 5-phosphoribose 1-diphosphate to form N'-(5'-phosphoribosyl)-ATP (PR-ATP). Has a crucial role in the pathway because the rate of histidine biosynthesis seems to be controlled primarily by regulation of HisG enzymatic activity. In Helicobacter hepaticus (strain ATCC 51449 / 3B1), this protein is ATP phosphoribosyltransferase.